The sequence spans 338 residues: MSINVNEIVLHQITKSIEGDAMKLNTMLRERLLTITPEVEQMMLQLHQAYQNKSKAYAVFNENSLFAQDLNRFLEHESEFLDFSQKATALLVNELSRYPFADEGTLVLCRYNFLATDYLFIALLDSRASMLVDEQLEIHRTKYLEISQFDIAARLNLTELSLDAKSDRYLTFVKGRVGRKIGDFFMDFLGAEEGLNPQVQNQCLLQAVSDYCAQADLSKEQSQAVKKQVFEYCKGQMNVGEEIALTELSATMPTLNEQAFASFAAEQAYGLAEHIPPVRSALKTLTKFSGSGKGITLSFDAELINQRVFWDEATDSLTIQGLPPNLRDQLQRQLKGQN.

The protein belongs to the YejK family.

Its subcellular location is the cytoplasm. It is found in the nucleoid. The sequence is that of Nucleoid-associated protein PM1885 from Pasteurella multocida (strain Pm70).